Consider the following 434-residue polypeptide: Methylenetetrahydrofolate--tRNA-(uracil-5-)-methyltransferase TrmFO (434 aa).

Gly10–Gly15 serves as a coordination point for FAD.

This sequence belongs to the MnmG family. TrmFO subfamily. It depends on FAD as a cofactor.

Its subcellular location is the cytoplasm. The enzyme catalyses uridine(54) in tRNA + (6R)-5,10-methylene-5,6,7,8-tetrahydrofolate + NADH + H(+) = 5-methyluridine(54) in tRNA + (6S)-5,6,7,8-tetrahydrofolate + NAD(+). The catalysed reaction is uridine(54) in tRNA + (6R)-5,10-methylene-5,6,7,8-tetrahydrofolate + NADPH + H(+) = 5-methyluridine(54) in tRNA + (6S)-5,6,7,8-tetrahydrofolate + NADP(+). Catalyzes the folate-dependent formation of 5-methyl-uridine at position 54 (M-5-U54) in all tRNAs. In Bacillus cereus (strain AH820), this protein is Methylenetetrahydrofolate--tRNA-(uracil-5-)-methyltransferase TrmFO.